The sequence spans 609 residues: MSALTTSQLATSATGFGIADRSAPSSLLRHGFQGLKPRSPAGGDATSLSVTTSARATPKQQRSVQRGSRRFPSVVVYATGAGMNVVFVGAEMAPWSKTGGLGDVLGGLPPAMAANGHRVMVISPRYDQYKDAWDTSVVAEIKVADRYERVRFFHCYKRGVDRVFIDHPSFLEKVWGKTGEKIYGPDTGVDYKDNQMRFSLLCQAALEAPRILNLNNNPYFKGTYGEDVVFVCNDWHTGPLASYLKNNYQPNGIYRNAKVAFCIHNISYQGRFAFEDYPELNLSERFRSSFDFIDGYDTPVEGRKINWMKAGILEADRVLTVSPYYAEELISGIARGCELDNIMRLTGITGIVNGMDVSEWDPSKDKYITAKYDATTAIEAKALNKEALQAEAGLPVDRKIPLIAFIGRLEEQKGPDVMAAAIPELMQEDVQIVLLGTGKKKFEKLLKSMEEKYPGKVRAVVKFNAPLAHLIMAGADVLAVPSRFEPCGLIQLQGMRYGTPCACASTGGLVDTVIEGKTGFHMGRLSVNCKVVEPSDVKKVAATLKRAIKVVGTPAYEEMVRNCMNQDLSWKGPAKNWENVLLGLGVAGSAPGIEGDEIAPLAKENVAAP.

The N-terminal 77 residues, Met1–Tyr77, are a transit peptide targeting the chloroplast. The disordered stretch occupies residues Arg29–Gly67. The span at Thr46–Arg66 shows a compositional bias: polar residues. Lys97 serves as a coordination point for ADP-alpha-D-glucose.

This sequence belongs to the glycosyltransferase 1 family. Bacterial/plant glycogen synthase subfamily.

Its subcellular location is the plastid. It localises to the chloroplast. It is found in the amyloplast. The enzyme catalyses an NDP-alpha-D-glucose + [(1-&gt;4)-alpha-D-glucosyl](n) = [(1-&gt;4)-alpha-D-glucosyl](n+1) + a ribonucleoside 5'-diphosphate + H(+). It participates in glycan biosynthesis; starch biosynthesis. In terms of biological role, required for the synthesis of amylose in endosperm. This is Granule-bound starch synthase 1, chloroplastic/amyloplastic (WAXY) from Oryza glaberrima (African rice).